The following is a 325-amino-acid chain: Malate dehydrogenase (325 aa).

Glycine 7–glycine 13 lines the NADP(+) pocket. Substrate-binding residues include arginine 84 and arginine 90. NADP(+) contacts are provided by residues asparagine 97 and valine 120–asparagine 122. Residues asparagine 122 and arginine 153 each contribute to the substrate site. The active-site Proton acceptor is the histidine 177.

Belongs to the LDH/MDH superfamily.

It carries out the reaction (S)-malate + NADP(+) = oxaloacetate + NADPH + H(+). It catalyses the reaction (S)-malate + NAD(+) = oxaloacetate + NADH + H(+). Catalyzes the reversible oxidation of malate to oxaloacetate. Can use NAD(+) and NADP(+) with similar specific activity. This chain is Malate dehydrogenase, found in Methanothermobacter marburgensis (strain ATCC BAA-927 / DSM 2133 / JCM 14651 / NBRC 100331 / OCM 82 / Marburg) (Methanobacterium thermoautotrophicum).